The sequence spans 392 residues: 6-aminohexanoate-dimer hydrolase (392 aa).

The disordered stretch occupies residues 1–27; the sequence is MNTPTTGSHPARYPSAAAGEPTLDSWQ. The active site involves S112.

It carries out the reaction [N-(6-aminohexanoyl)](n) + H2O = [N-(6-aminohexanoyl)](n-1) + 6-aminohexanoate. The catalysed reaction is N-(6-aminohexanoyl)-6-aminohexanoate + H2O = 2 6-aminohexanoate. Its pathway is xenobiotic degradation; nylon-6 oligomer degradation. Involved in nylon oligomer degradation. This chain is 6-aminohexanoate-dimer hydrolase, found in Paenarthrobacter ureafaciens.